A 168-amino-acid polypeptide reads, in one-letter code: Large ribosomal subunit protein uL24 (168 aa).

Residues 112-168 (LEGKDPRKQPKEAPKAAEKPAKEEPKKETPKAEEKPAKEEPKETKVEKKSEEKEDEN) form a disordered region.

It belongs to the universal ribosomal protein uL24 family. Part of the 50S ribosomal subunit.

Functionally, one of two assembly initiator proteins, it binds directly to the 5'-end of the 23S rRNA, where it nucleates assembly of the 50S subunit. In terms of biological role, located at the polypeptide exit tunnel on the outside of the subunit. This is Large ribosomal subunit protein uL24 from Nitrosopumilus maritimus (strain SCM1).